A 216-amino-acid chain; its full sequence is ATP-dependent dethiobiotin synthetase BioD (216 aa).

An ATP-binding site is contributed by 13–18; it reads EVGKTY. Thr-17 is a Mg(2+) binding site. The active site involves Lys-38. Residue Thr-42 coordinates substrate. ATP-binding positions include Asp-47 and 112–115; that span reads EGVG. Mg(2+) contacts are provided by Asp-47 and Glu-112.

The protein belongs to the dethiobiotin synthetase family. As to quaternary structure, homodimer. Requires Mg(2+) as cofactor.

The protein localises to the cytoplasm. It catalyses the reaction (7R,8S)-7,8-diammoniononanoate + CO2 + ATP = (4R,5S)-dethiobiotin + ADP + phosphate + 3 H(+). Its pathway is cofactor biosynthesis; biotin biosynthesis; biotin from 7,8-diaminononanoate: step 1/2. Its function is as follows. Catalyzes a mechanistically unusual reaction, the ATP-dependent insertion of CO2 between the N7 and N8 nitrogen atoms of 7,8-diaminopelargonic acid (DAPA, also called 7,8-diammoniononanoate) to form a ureido ring. In Endomicrobium trichonymphae, this protein is ATP-dependent dethiobiotin synthetase BioD.